We begin with the raw amino-acid sequence, 343 residues long: Undecaprenyl-diphosphatase 2 (343 aa).

4 consecutive transmembrane segments (helical) span residues 21-41 (LFPVSSLGHSVLIPALIGGSW), 57-77 (PYLTFVVGLHVATAVALLVFF), 104-124 (LAWLIVAATVPVGIIGLALEH), and 129-149 (LFAKPLAAALFLTANGMILLA). The span at 179–193 (VPAPATVPTQTTSAP) shows a compositional bias: low complexity. The disordered stretch occupies residues 179-202 (VPAPATVPTQTTSAPGGRATARHT). The next 4 membrane-spanning stretches (helical) occupy residues 225–245 (AGVIGLFQTLALLAGISRSGI), 265–285 (FLLATPVILAAGLLKLPALAG), 294–314 (QVILGALIAGIAAYLSIRFLV), and 322–342 (LTPFAIYCLLTGALCTVRFAI).

Belongs to the UppP family.

Its subcellular location is the cell membrane. The catalysed reaction is di-trans,octa-cis-undecaprenyl diphosphate + H2O = di-trans,octa-cis-undecaprenyl phosphate + phosphate + H(+). In terms of biological role, catalyzes the dephosphorylation of undecaprenyl diphosphate (UPP). Confers resistance to bacitracin. The chain is Undecaprenyl-diphosphatase 2 from Frankia alni (strain DSM 45986 / CECT 9034 / ACN14a).